The sequence spans 101 residues: Ribonuclease kappa-B (101 aa).

The next 2 helical transmembrane spans lie at 13–33 and 68–88; these read ACGI…GVFF and VSYN…FSFC.

It belongs to the RNase K family.

It localises to the membrane. Endoribonuclease which preferentially cleaves ApU and ApG phosphodiester bonds. The polypeptide is Ribonuclease kappa-B (rnasek-b) (Xenopus laevis (African clawed frog)).